We begin with the raw amino-acid sequence, 87 residues long: Cell division protein FtsL (87 aa).

Residues 1-6 (MNKSNF) are Cytoplasmic-facing. The chain crosses the membrane as a helical span at residues 7–23 (FLLLAVCVSAFSVVMQQ). Residues 24–87 (NQYRLNFTAL…GNTFMVEHQR (64 aa)) lie on the Periplasmic side of the membrane. The stretch at 31 to 71 (TALDKAKKQEIALEQDYAQMRLQQARLANHEAIRAAAEKQN) forms a coiled coil. The segment at 68–87 (EKQNLHPPVSGNTFMVEHQR) is disordered.

It belongs to the FtsL family. As to quaternary structure, part of a complex composed of FtsB, FtsL and FtsQ.

Its subcellular location is the cell inner membrane. Functionally, essential cell division protein. May link together the upstream cell division proteins, which are predominantly cytoplasmic, with the downstream cell division proteins, which are predominantly periplasmic. In Neisseria gonorrhoeae (strain ATCC 700825 / FA 1090), this protein is Cell division protein FtsL.